The following is a 341-amino-acid chain: MNSYLRKLVEGQHLTEEEMYEAGLLLLSDNILESEVAAFLVLLKAKGETAEEIYGLVRALREKALPFSNHIKGAMDNCGTGGDGAQTFNISTTSAFVLAGAGVKVAKHGNRAVSSKTGSADLLEELGVNISCTPGEIDYLLENVGIAFLFAPAMHPALRRIMKIRKELNVPTIFNLIGPLTNPVNLETQFVGIYKRDMLLPVAEVLQKLGRKQALVVNGSGFLDEASLQGENHVVVLKDNEIVEMSIDPEKYGFSRVKNEEIRGGNSKENAKITLGVLSGEKSVYRDTVLLNAGLALFANGRAETIEEGITLATHSIDSGKALAKLNLLIAASHEKLERVN.

Residues Gly79, 82–83, Thr87, 89–92, 107–115, and Ser119 contribute to the 5-phospho-alpha-D-ribose 1-diphosphate site; these read GD, NIST, and KHGNRAVSS. Gly79 serves as a coordination point for anthranilate. Ser91 provides a ligand contact to Mg(2+). Residue Asn110 coordinates anthranilate. Arg165 lines the anthranilate pocket. Residues Asp224 and Glu225 each coordinate Mg(2+).

The protein belongs to the anthranilate phosphoribosyltransferase family. As to quaternary structure, homodimer. The cofactor is Mg(2+).

The catalysed reaction is N-(5-phospho-beta-D-ribosyl)anthranilate + diphosphate = 5-phospho-alpha-D-ribose 1-diphosphate + anthranilate. It functions in the pathway amino-acid biosynthesis; L-tryptophan biosynthesis; L-tryptophan from chorismate: step 2/5. In terms of biological role, catalyzes the transfer of the phosphoribosyl group of 5-phosphorylribose-1-pyrophosphate (PRPP) to anthranilate to yield N-(5'-phosphoribosyl)-anthranilate (PRA). The sequence is that of Anthranilate phosphoribosyltransferase from Bacillus mycoides (strain KBAB4) (Bacillus weihenstephanensis).